The primary structure comprises 612 residues: MFTFEAAKYPTASGVYLMKGEAGTVFYVGKAKNLRSRLRSYFSEHGDNRPQIRFLLKRVHDIETIVTDTEKEALILENTLIKKYRPRYNINLRDDKTYLSLRLDPRQEFPMLQLVRRVRRDGALYFGPYASSTAVRATLQEIYRIFPLRRHPWESCRSRSRPCLYYQIGQCSAPCHGKISAEDYQRLVDGALALLAGRESEVVESLQHQMAAAAERMAFEEAARLRDQLRAIEQTVERQKVVEAGGGDQDVVGLHREGGEVELAILFVREGKVIDRRSYNLEWRLDEEELLSTFLQRFYGRDVCIPDRVLLPFLPEGSEVLAEWLSEQRGKKVQVLAPLRGTRRKLVALAARNAEESFRERGSRREARQGVLEEIARRLHLTRFPHRIECFDISNVQGRFSVGSMAVLSDGEPDKGAYRHFRIRSVEGSDDYASLYEVLRRRLERGLREESLPDFILMDGGKGQLNIVCTVLDELNLTGRIDVAGIAKSRVMANVRGKAVERSEERFFLPGRKNSVNLRQGSPALFMLERLRDEAHRFAITHHRKLRRRSTLGSVLEEIPGVGEKRRKALLKHFGSLKAVQAASLDELRAMPGLPAALAERIHAAFQERKTS.

The GIY-YIG domain maps to 11-90 (TASGVYLMKG…IKKYRPRYNI (80 aa)). The UVR domain occupies 200-235 (SEVVESLQHQMAAAAERMAFEEAARLRDQLRAIEQT).

Belongs to the UvrC family. In terms of assembly, interacts with UvrB in an incision complex.

The protein resides in the cytoplasm. Its function is as follows. The UvrABC repair system catalyzes the recognition and processing of DNA lesions. UvrC both incises the 5' and 3' sides of the lesion. The N-terminal half is responsible for the 3' incision and the C-terminal half is responsible for the 5' incision. The sequence is that of UvrABC system protein C from Syntrophotalea carbinolica (strain DSM 2380 / NBRC 103641 / GraBd1) (Pelobacter carbinolicus).